A 42-amino-acid chain; its full sequence is uncharacterized protein (42 aa).

Residues 18–38 (VGAISLTVMMILFFIAIVWFL) traverse the membrane as a helical segment.

The protein localises to the host membrane. This is an uncharacterized protein from His1 virus (isolate Australia/Victoria) (His1V).